The sequence spans 1272 residues: AF4/FMR2 family member 2 (1272 aa).

7 disordered regions span residues 151-190 (SNRK…DPPQ), 204-231 (PQIG…DTFK), 372-401 (TLQK…EDDL), 422-497 (KAKP…QLDK), 557-694 (IREK…ETLQ), 715-743 (TLST…PAMQ), and 772-899 (PGQN…QDKN). A compositionally biased stretch (basic and acidic residues) spans 155–164 (SKSEWPRDSH). The segment covering 165 to 179 (NTSPAQASQTSSQPN) has biased composition (low complexity). Residues 180–189 (KMQTSTQDPP) are compositionally biased toward polar residues. Over residues 210–227 (EKSNPSSKEENNPNSGGE) the composition is skewed to low complexity. Polar residues predominate over residues 374-384 (QKWSDPSSRAS). Over residues 387–396 (MLEDDLKLSS) the composition is skewed to basic and acidic residues. Phosphoserine is present on Ser395. The segment covering 436–450 (TPQSTPATQTNVGSG) has biased composition (polar residues). Position 482 is a phosphothreonine (Thr482). The segment covering 580-590 (STSVDTVSQRT) has biased composition (polar residues). Basic and acidic residues predominate over residues 620 to 633 (PKEKGSVELPDPPR). A compositionally biased stretch (basic residues) spans 634 to 644 (SRNKATAHKPV). A compositionally biased stretch (low complexity) spans 715–734 (TLSTLTNGNSNNLSTSNEET). Over residues 815–831 (PAETAEKIPEKKQRLED) the composition is skewed to basic and acidic residues. Pro residues predominate over residues 841-850 (CISPAPPHKP). Polar residues predominate over residues 887 to 899 (VSGNNGHFGQDKN).

The protein belongs to the AF4 family. In terms of tissue distribution, highly expressed in the hippocampus, the piriform cortex, Purkinje cells and the cingulate gyrus.

Its subcellular location is the nucleus speckle. In terms of biological role, RNA-binding protein. Might be involved in alternative splicing regulation through an interaction with G-quartet RNA structure. In Mus musculus (Mouse), this protein is AF4/FMR2 family member 2.